The following is a 300-amino-acid chain: Epimerase family protein SAB0724c (300 aa).

The protein belongs to the NAD(P)-dependent epimerase/dehydratase family. SDR39U1 subfamily.

This Staphylococcus aureus (strain bovine RF122 / ET3-1) protein is Epimerase family protein SAB0724c.